The sequence spans 296 residues: 4-hydroxy-tetrahydrodipicolinate synthase (296 aa).

Thr-49 provides a ligand contact to pyruvate. The active-site Proton donor/acceptor is the Tyr-137. Lys-165 functions as the Schiff-base intermediate with substrate in the catalytic mechanism. Ile-207 contributes to the pyruvate binding site.

The protein belongs to the DapA family. Homotetramer; dimer of dimers.

It localises to the cytoplasm. It carries out the reaction L-aspartate 4-semialdehyde + pyruvate = (2S,4S)-4-hydroxy-2,3,4,5-tetrahydrodipicolinate + H2O + H(+). The protein operates within amino-acid biosynthesis; L-lysine biosynthesis via DAP pathway; (S)-tetrahydrodipicolinate from L-aspartate: step 3/4. Functionally, catalyzes the condensation of (S)-aspartate-beta-semialdehyde [(S)-ASA] and pyruvate to 4-hydroxy-tetrahydrodipicolinate (HTPA). This Bradyrhizobium diazoefficiens (strain JCM 10833 / BCRC 13528 / IAM 13628 / NBRC 14792 / USDA 110) protein is 4-hydroxy-tetrahydrodipicolinate synthase.